A 259-amino-acid polypeptide reads, in one-letter code: Imidazole glycerol phosphate synthase subunit HisF (259 aa).

Residues Asp11 and Asp130 contribute to the active site.

It belongs to the HisA/HisF family. As to quaternary structure, heterodimer of HisH and HisF.

It localises to the cytoplasm. It carries out the reaction 5-[(5-phospho-1-deoxy-D-ribulos-1-ylimino)methylamino]-1-(5-phospho-beta-D-ribosyl)imidazole-4-carboxamide + L-glutamine = D-erythro-1-(imidazol-4-yl)glycerol 3-phosphate + 5-amino-1-(5-phospho-beta-D-ribosyl)imidazole-4-carboxamide + L-glutamate + H(+). It participates in amino-acid biosynthesis; L-histidine biosynthesis; L-histidine from 5-phospho-alpha-D-ribose 1-diphosphate: step 5/9. Its function is as follows. IGPS catalyzes the conversion of PRFAR and glutamine to IGP, AICAR and glutamate. The HisF subunit catalyzes the cyclization activity that produces IGP and AICAR from PRFAR using the ammonia provided by the HisH subunit. This Shewanella amazonensis (strain ATCC BAA-1098 / SB2B) protein is Imidazole glycerol phosphate synthase subunit HisF.